The chain runs to 291 residues: Feruloyl esterase B (291 aa).

Positions 1–18 are cleaved as a signal peptide; that stretch reads MLVRSFLGFAVLAATCLA. Asparagine 117 carries N-linked (GlcNAc...) asparagine glycosylation. The active-site Charge relay system is the serine 136. A glycan (N-linked (GlcNAc...) asparagine) is linked at asparagine 179.

The protein belongs to the carbohydrate esterase 1 (CE1) family. Feruloyl esterase type B subfamily.

It is found in the secreted. It catalyses the reaction feruloyl-polysaccharide + H2O = ferulate + polysaccharide.. Feruloyl esterase which acts in synergy with xylanases in degradation of plant cell walls. Hydrolyzes the ester linkage of hydroxycinnamic acids (ferulic acid (FA) and p-coumaric acid) and diferulates present in plant cell walls. Is active on substrates containing ferulic acid ester linked to the C-5 and C-2 linkages of arabinofuranose, while it was found capable of de-esterifying acetylated glucuronoxylans. Efficiently releases ferulic acid (FA) from destarched wheat bran when incubated with an M3 xylanase. The chain is Feruloyl esterase B (Fae1a) from Thermothelomyces thermophilus (strain ATCC 42464 / BCRC 31852 / DSM 1799) (Sporotrichum thermophile).